Consider the following 590-residue polypeptide: UvrABC system protein C (590 aa).

A GIY-YIG domain is found at 14–91 (DQPGCYLMKD…IKKYDPKYNV (78 aa)). The region spanning 196 to 231 (QQIKKELTEKMQEAAEQLEFERAKELRDQIAYIDST) is the UVR domain.

Belongs to the UvrC family. In terms of assembly, interacts with UvrB in an incision complex.

The protein localises to the cytoplasm. The UvrABC repair system catalyzes the recognition and processing of DNA lesions. UvrC both incises the 5' and 3' sides of the lesion. The N-terminal half is responsible for the 3' incision and the C-terminal half is responsible for the 5' incision. The polypeptide is UvrABC system protein C (Bacillus pumilus (strain SAFR-032)).